Reading from the N-terminus, the 312-residue chain is tRNA dimethylallyltransferase (312 aa).

An ATP-binding site is contributed by G14–S21. T16–S21 is a substrate binding site. 2 interaction with substrate tRNA regions span residues D39–L42 and Q163–R167.

The protein belongs to the IPP transferase family. Monomer. It depends on Mg(2+) as a cofactor.

It carries out the reaction adenosine(37) in tRNA + dimethylallyl diphosphate = N(6)-dimethylallyladenosine(37) in tRNA + diphosphate. In terms of biological role, catalyzes the transfer of a dimethylallyl group onto the adenine at position 37 in tRNAs that read codons beginning with uridine, leading to the formation of N6-(dimethylallyl)adenosine (i(6)A). This Methylococcus capsulatus (strain ATCC 33009 / NCIMB 11132 / Bath) protein is tRNA dimethylallyltransferase.